Here is a 321-residue protein sequence, read N- to C-terminus: Nacrein-like protein (321 aa).

Positions 1 to 319 (RGPKNWCKVH…NKNVIVYRNH (319 aa)) constitute an Alpha-carbonic anhydrase domain. Residue H58 is the Proton acceptor of the active site.

This sequence belongs to the alpha-carbonic anhydrase family. In terms of tissue distribution, component of the organic matrix of calcified shell layers like nacre and prisms.

The protein resides in the secreted. In Mytilus californianus (California mussel), this protein is Nacrein-like protein.